A 212-amino-acid polypeptide reads, in one-letter code: Thymidylate kinase (212 aa).

11 to 18 lines the ATP pocket; that stretch reads GPEGAGKT.

This sequence belongs to the thymidylate kinase family.

The catalysed reaction is dTMP + ATP = dTDP + ADP. In terms of biological role, phosphorylation of dTMP to form dTDP in both de novo and salvage pathways of dTTP synthesis. The protein is Thymidylate kinase of Streptococcus pneumoniae (strain P1031).